Consider the following 532-residue polypeptide: 4-amino-L-phenylalanyl-[CmlP-peptidyl-carrier-protein] 3-hydroxylase (532 aa).

Positions 305, 307, 309, 310, 377, and 403 each coordinate Fe cation.

Belongs to the metallo-beta-lactamase superfamily. As to quaternary structure, homodimer. Fe(2+) is required as a cofactor.

The enzyme catalyses 4-amino-L-phenylalanyl-[peptidyl-carrier protein] + AH2 + O2 = (2R)-2-(4-aminophenyl)-L-seryl-[peptidyl-carrier protein] + A + H2O. It participates in antibiotic biosynthesis. Involved in chloramphenicol biosynthesis. Catalyzes the beta-hydroxylation of 4-amino-L-phenylalanine (L-PAPA) covalently bound to CmlP to form L-p-aminophenylserine. In Streptomyces venezuelae (strain ATCC 10712 / CBS 650.69 / DSM 40230 / JCM 4526 / NBRC 13096 / PD 04745), this protein is 4-amino-L-phenylalanyl-[CmlP-peptidyl-carrier-protein] 3-hydroxylase.